The primary structure comprises 296 residues: NAD kinase (296 aa).

The Proton acceptor role is filled by D72. NAD(+)-binding positions include D72 to G73, N146 to D147, R157, K174, D176, T187 to S192, and Q247.

The protein belongs to the NAD kinase family. It depends on a divalent metal cation as a cofactor.

The protein resides in the cytoplasm. It catalyses the reaction NAD(+) + ATP = ADP + NADP(+) + H(+). Its function is as follows. Involved in the regulation of the intracellular balance of NAD and NADP, and is a key enzyme in the biosynthesis of NADP. Catalyzes specifically the phosphorylation on 2'-hydroxyl of the adenosine moiety of NAD to yield NADP. This is NAD kinase from Pseudomonas putida (strain ATCC 700007 / DSM 6899 / JCM 31910 / BCRC 17059 / LMG 24140 / F1).